Reading from the N-terminus, the 383-residue chain is MHC class I polypeptide-related sequence A (383 aa).

Residues 1-23 (MGLGPVFLLLAGIFPFAPPGAAA) form the signal peptide. Topologically, residues 24 to 307 (EPHSLRYNLT…GKVLVLQSHW (284 aa)) are extracellular. The N-linked (GlcNAc...) asparagine glycan is linked to N31. C59 and C64 are joined by a disulfide. The N-linked (GlcNAc...) asparagine glycan is linked to N79. Cysteines 119 and 187 form a disulfide. The region spanning 207–296 (PMVNVTRSEA…SGNHSTHPVP (90 aa)) is the Ig-like C1-type domain. 3 N-linked (GlcNAc...) asparagine glycosylation sites follow: N210, N220, and N261. C225 and C282 are joined by a disulfide. A helical transmembrane segment spans residues 308–328 (QTFHVSAVAAAAIFVIIIFYV). At 329 to 383 (RCCKKKTSAAEGPELVSLQVLDQHPVGTSDHRDATQLGFQPLMSDLGSTGSTEGA) the chain is on the cytoplasmic side. Residues C330 and C331 are each lipidated (S-palmitoyl cysteine).

Belongs to the MHC class I family. MIC subfamily. As to quaternary structure, unlike classical MHC class I molecules, does not form a heterodimer with beta-2-microglobulin. Binds as a monomer to a KLRK1/NKG2D homodimer. KLRK1 forms a complex with HCST/DAP10 in which KLRK1 binds MICA while HCST acts as an adapter molecule which enables signal transduction. Interacts with PDIA6 on the surface of tumor cells, leading to disulfide bond reduction which is required for release of MICA from tumor cells. (Microbial infection) Interacts with human cytomegalovirus/HHV-5 protein UL142. In terms of processing, N-glycosylated. Glycosylation is not essential for interaction with KLRK1/NKG2D but enhances complex formation. Post-translationally, proteolytically cleaved and released from the cell surface of tumor cells which impairs KLRK1/NKG2D expression and T-cell activation. Palmitoylated on cysteine residues in the cytoplasmic tail leading to its association with membrane microdomains enriched in cholesterol. In terms of processing, N-glycosylation is necessary for cell surface expression. Post-translationally, (Microbial infection) Ubiquitinated by human herpesvirus 8 protein K5, leading to degradation. Widely expressed with the exception of the central nervous system where it is absent. Expressed predominantly in gastric epithelium and also in monocytes, keratinocytes, endothelial cells, fibroblasts and in the outer layer of Hassal's corpuscles within the medulla of normal thymus. In skin, expressed mainly in the keratin layers, basal cells, ducts and follicles. Also expressed in many, but not all, epithelial tumors of lung, breast, kidney, ovary, prostate and colon. In thyomas, overexpressed in cortical and medullar epithelial cells. Tumors expressing MICA display increased levels of gamma delta T-cells.

It is found in the cell membrane. Its subcellular location is the cytoplasm. Widely expressed membrane-bound protein which acts as a ligand to stimulate an activating receptor KLRK1/NKG2D, expressed on the surface of essentially all human natural killer (NK), gammadelta T and CD8 alphabeta T-cells. Up-regulated in stressed conditions, such as viral and bacterial infections or DNA damage response, serves as signal of cellular stress, and engagement of KLRK1/NKG2D by MICA triggers NK-cells resulting in a range of immune effector functions, such as cytotoxicity and cytokine production. The sequence is that of MHC class I polypeptide-related sequence A from Homo sapiens (Human).